The following is a 257-amino-acid chain: Leucine-rich repeat-containing protein 3 (257 aa).

The signal sequence occupies residues 1-32 (MGTVRPPRPSLLLVSTRESCLFLLFCLHLGAA). Residues 33-64 (CPQPCRCPDHAGAVAVFCSLRGLQEVPEDIPA) form the LRRNT domain. LRR repeat units follow at residues 65-86 (NTVLLKLDANKISHLPDGAFQH), 89-110 (RLRELDLSHNAIEAIGSATFAG), 114-135 (GLRLLDLSYNRIQRIPKDALGK), and 136-157 (LSAKIRLSHNPLHCECALQEAL). Residues 205–225 (VAMLVTMFGWFAMVIAYVVYY) traverse the membrane as a helical segment.

This sequence belongs to the LRRC3 family. As to expression, widely expressed; detected in testis, lung, small intestine, breast, brain, heart, bone marrow, placenta, colon, fetal brain, liver, fetal liver, thymus, salivary gland, spinal cord, spleen, trachea and adrenal gland.

Its subcellular location is the membrane. This is Leucine-rich repeat-containing protein 3 (LRRC3) from Homo sapiens (Human).